We begin with the raw amino-acid sequence, 238 residues long: Demethylmenaquinone methyltransferase (238 aa).

Residues Thr-60, Asp-81, and 108–109 (NA) each bind S-adenosyl-L-methionine.

Belongs to the class I-like SAM-binding methyltransferase superfamily. MenG/UbiE family.

The enzyme catalyses a 2-demethylmenaquinol + S-adenosyl-L-methionine = a menaquinol + S-adenosyl-L-homocysteine + H(+). Its pathway is quinol/quinone metabolism; menaquinone biosynthesis; menaquinol from 1,4-dihydroxy-2-naphthoate: step 2/2. Its function is as follows. Methyltransferase required for the conversion of demethylmenaquinol (DMKH2) to menaquinol (MKH2). The sequence is that of Demethylmenaquinone methyltransferase from Oceanobacillus iheyensis (strain DSM 14371 / CIP 107618 / JCM 11309 / KCTC 3954 / HTE831).